A 202-amino-acid polypeptide reads, in one-letter code: ATP-dependent Clp protease proteolytic subunit 1 (202 aa).

Catalysis depends on S102, which acts as the Nucleophile. H127 is an active-site residue.

It belongs to the peptidase S14 family. In terms of assembly, fourteen ClpP subunits assemble into 2 heptameric rings which stack back to back to give a disk-like structure with a central cavity, resembling the structure of eukaryotic proteasomes.

The protein resides in the cytoplasm. The enzyme catalyses Hydrolysis of proteins to small peptides in the presence of ATP and magnesium. alpha-casein is the usual test substrate. In the absence of ATP, only oligopeptides shorter than five residues are hydrolyzed (such as succinyl-Leu-Tyr-|-NHMec, and Leu-Tyr-Leu-|-Tyr-Trp, in which cleavage of the -Tyr-|-Leu- and -Tyr-|-Trp bonds also occurs).. Functionally, cleaves peptides in various proteins in a process that requires ATP hydrolysis. Has a chymotrypsin-like activity. Plays a major role in the degradation of misfolded proteins. This is ATP-dependent Clp protease proteolytic subunit 1 from Agrobacterium fabrum (strain C58 / ATCC 33970) (Agrobacterium tumefaciens (strain C58)).